The primary structure comprises 622 residues: Apical membrane antigen 1 (622 aa).

The first 24 residues, 1 to 24 (MRKLYCVLLLSAFEFTYMINFGRG), serve as a signal peptide directing secretion. The Extracellular portion of the chain corresponds to 25–546 (QNYWEHPYQK…EHKPTYDKMK (522 aa)). Intrachain disulfides connect cysteine 149–cysteine 302, cysteine 217–cysteine 247, cysteine 263–cysteine 275, cysteine 320–cysteine 418, and cysteine 337–cysteine 409. The N-linked (GlcNAc...) asparagine glycan is linked to asparagine 162. Asparagine 286, asparagine 371, asparagine 421, asparagine 422, and asparagine 499 each carry an N-linked (GlcNAc...) asparagine glycan. Disulfide bonds link cysteine 443–cysteine 502, cysteine 490–cysteine 507, and cysteine 492–cysteine 509. Residues 547–567 (IIIASSAAVAVLATILMVYLY) form a helical membrane-spanning segment. The Cytoplasmic segment spans residues 568–622 (KRKGNAEKYDKMDEPQHYGKSNSRNDEMLDPEASFWGEEKRASHTTPVLMEKPYY). Residues 578-594 (KMDEPQHYGKSNSRNDE) are compositionally biased toward basic and acidic residues. A disordered region spans residues 578 to 607 (KMDEPQHYGKSNSRNDEMLDPEASFWGEEK).

Belongs to the apicomplexan parasites AMA1 family.

The protein resides in the membrane. Its function is as follows. Involved in parasite invasion of erythrocytes. The sequence is that of Apical membrane antigen 1 (AMA-1) from Plasmodium falciparum (isolate FC27 / Papua New Guinea).